Here is a 249-residue protein sequence, read N- to C-terminus: Leucyl/phenylalanyl-tRNA--protein transferase (249 aa).

The segment at 1–21 is disordered; it reads MSRTLPHLLSPDPASPFPPAE.

Belongs to the L/F-transferase family.

It is found in the cytoplasm. The enzyme catalyses N-terminal L-lysyl-[protein] + L-leucyl-tRNA(Leu) = N-terminal L-leucyl-L-lysyl-[protein] + tRNA(Leu) + H(+). The catalysed reaction is N-terminal L-arginyl-[protein] + L-leucyl-tRNA(Leu) = N-terminal L-leucyl-L-arginyl-[protein] + tRNA(Leu) + H(+). It carries out the reaction L-phenylalanyl-tRNA(Phe) + an N-terminal L-alpha-aminoacyl-[protein] = an N-terminal L-phenylalanyl-L-alpha-aminoacyl-[protein] + tRNA(Phe). Functionally, functions in the N-end rule pathway of protein degradation where it conjugates Leu, Phe and, less efficiently, Met from aminoacyl-tRNAs to the N-termini of proteins containing an N-terminal arginine or lysine. The sequence is that of Leucyl/phenylalanyl-tRNA--protein transferase from Xanthomonas campestris pv. campestris (strain B100).